Reading from the N-terminus, the 470-residue chain is Cupincin (470 aa).

Positions 1-34 are cleaved as a signal peptide; that stretch reads MAKKKTSSSMARSQLAALLISLCFLSLASNAVGW. Residues 36–52 show a composition bias toward basic and acidic residues; that stretch reads RRGEREEEDERRRHGGE. Disordered stretches follow at residues 36-59 and 240-261; these read RRGE…PYHL and KSCS…PSSL. 2 Cupin type-1 domains span residues 57-215 and 259-445; these read YHLG…EELE and SSLT…AREA. N-linked (GlcNAc...) asparagine glycosylation occurs at asparagine 297. The tract at residues 330 to 368 is disordered; it reads PHVSGGGSSERREREREHGRRREEEQGEEEHGERGEKAR. A compositionally biased stretch (basic and acidic residues) spans 338 to 367; sequence SERREREREHGRRREEEQGEEEHGERGEKA. Zn(2+) is bound by residues histidine 347, glutamate 352, and histidine 360.

It belongs to the 7S seed storage protein family. Homotrimer. It depends on Zn(2+) as a cofactor.

The protein resides in the secreted. Functionally, seed storage protein. Globulin-like protein that acts as a zinc metalloprotease. Cleaves specifically between Leu-15 and Tyr-16 of insulin B chain, and Gln-1 and Leu-2 of neurotensin (NT) peptide in vitro. May play a role as an initiating endopeptidase in germinating seeds. The polypeptide is Cupincin (Oryza sativa subsp. japonica (Rice)).